The sequence spans 400 residues: Double C2-like domain-containing protein alpha (400 aa).

The interval 1–89 (MRGRRGDRMT…DSYDSDDATA (89 aa)) is interaction with UNC13D and DYNLT1. C2 domains lie at 89–211 (ALGT…HFNI) and 251–384 (ERGR…ERWH). Ca(2+) contacts are provided by D120, D126, D181, D183, D282, D288, D342, D344, and D350. The interaction with UNC13D stretch occupies residues 215 to 400 (RQVPLASPSS…PPAAGALSSA (186 aa)).

As to quaternary structure, interacts (via N-terminus) with UNC13A. Interacts with cytoplasmic dynein light chain DYNLT1. Interacts with UNC13D. Ca(2+) is required as a cofactor. Predominantly expressed in brain. Also expressed in testis.

It is found in the lysosome. The protein resides in the cytoplasmic vesicle. Its subcellular location is the secretory vesicle. The protein localises to the synaptic vesicle membrane. It localises to the synapse. It is found in the synaptosome. In terms of biological role, calcium sensor which most probably regulates fusion of vesicles with membranes. Binds calcium and phospholipids. May be involved in calcium dependent neurotransmitter release through the interaction with UNC13A. May be involved in calcium-dependent spontaneous release of neurotransmitter in absence of action potentials in neuronal cells. Regulates Ca(2+)-dependent secretory lysosome exocytosis in mast cells. The polypeptide is Double C2-like domain-containing protein alpha (DOC2A) (Homo sapiens (Human)).